A 216-amino-acid chain; its full sequence is Sperm microtubule inner protein 8 (216 aa).

In terms of assembly, microtubule inner protein component of sperm flagellar doublet microtubules. As to expression, expressed in testis.

The protein resides in the cytoplasm. It localises to the cytoskeleton. Its subcellular location is the flagellum axoneme. In terms of biological role, microtubule inner protein (MIP) part of the dynein-decorated doublet microtubules (DMTs) in flagellum axoneme. May serve to reinforce and thus stabilize the microtubule structure in the sperm flagella. The chain is Sperm microtubule inner protein 8 (Spmip8) from Mus musculus (Mouse).